Here is a 286-residue protein sequence, read N- to C-terminus: L-rhamnose-binding lectin CSL1 (286 aa).

2 consecutive SUEL-type lectin domains span residues 96 to 186 (TTCE…YICL) and 193 to 280 (TCEG…YTCL).

Its function is as follows. L-rhamnose binding lectin. Has hemagglutinating activity towards rabbit erythrocytes, but not human type B erythrocytes. Hemagglutinating activity is inhibited by smooth-type lipopolysaccharide (LPS) from K.pneumoniae, E.coli K-235, S.flexneri 1A, A.salmonicida and S.minnesota and rough-type LPS from S.flexneri, but not by rough-type LPS from E.coli K12 and E.coli EH100. Agglutinates E.coli K12 and B.subtilis. In Oncorhynchus keta (Chum salmon), this protein is L-rhamnose-binding lectin CSL1.